Reading from the N-terminus, the 179-residue chain is Probable chorismate pyruvate-lyase (179 aa).

The substrate site is built by Arg-82, Leu-120, and Glu-165.

The protein belongs to the UbiC family.

It is found in the cytoplasm. The enzyme catalyses chorismate = 4-hydroxybenzoate + pyruvate. It functions in the pathway cofactor biosynthesis; ubiquinone biosynthesis. Its function is as follows. Removes the pyruvyl group from chorismate, with concomitant aromatization of the ring, to provide 4-hydroxybenzoate (4HB) for the ubiquinone pathway. This chain is Probable chorismate pyruvate-lyase, found in Vibrio vulnificus (strain YJ016).